The chain runs to 294 residues: tRNA dimethylallyltransferase (294 aa).

9-16 is a binding site for ATP; sequence GPTASGKS. Residue 11–16 participates in substrate binding; that stretch reads TASGKS. The interval 155–159 is interaction with substrate tRNA; the sequence is QRVIR.

The protein belongs to the IPP transferase family. As to quaternary structure, monomer. Mg(2+) is required as a cofactor.

It catalyses the reaction adenosine(37) in tRNA + dimethylallyl diphosphate = N(6)-dimethylallyladenosine(37) in tRNA + diphosphate. Its function is as follows. Catalyzes the transfer of a dimethylallyl group onto the adenine at position 37 in tRNAs that read codons beginning with uridine, leading to the formation of N6-(dimethylallyl)adenosine (i(6)A). The polypeptide is tRNA dimethylallyltransferase (Leuconostoc citreum (strain KM20)).